The chain runs to 84 residues: Cell division topological specificity factor (84 aa).

This sequence belongs to the MinE family.

Functionally, prevents the cell division inhibition by proteins MinC and MinD at internal division sites while permitting inhibition at polar sites. This ensures cell division at the proper site by restricting the formation of a division septum at the midpoint of the long axis of the cell. This is Cell division topological specificity factor from Pseudomonas syringae pv. syringae (strain B728a).